The following is a 605-amino-acid chain: Glucose oxidase (605 aa).

Positions 1 to 16 (MKTILSSSLVVSMAAA) are cleaved as a signal peptide. FAD is bound by residues Leu-51 and Thr-52. The N-linked (GlcNAc...) asparagine glycan is linked to Asn-65. Glu-72 provides a ligand contact to FAD. Asn-111 carries N-linked (GlcNAc...) asparagine glycosylation. Residues Ser-125, Asn-129, Gly-130, and Thr-132 each coordinate FAD. Residues Cys-186 and Cys-228 are joined by a disulfide bond. N-linked (GlcNAc...) asparagine glycosylation is present at Asn-190. Val-272 is an FAD binding site. 4 N-linked (GlcNAc...) asparagine glycosylation sites follow: Asn-280, Asn-377, Asn-410, and Asn-495. Residue His-538 is the Proton acceptor of the active site. O2 contacts are provided by Arg-559 and Val-560. Gly-571 and Met-583 together coordinate FAD.

The protein belongs to the GMC oxidoreductase family. In terms of assembly, homodimer. The cofactor is FAD.

The protein resides in the secreted. The protein localises to the cell wall. It localises to the cytoplasm. It is found in the extracellular space. Its subcellular location is the extracellular matrix. The catalysed reaction is beta-D-glucose + O2 = D-glucono-1,5-lactone + H2O2. Glucose oxidase catalyzes the oxidation of beta-D-glucose to D-glucono-delta-lactone and hydrogen peroxide in the presence of molecular oxygen. Acts as a critical factor modulating pathogenicity by controlling transcription of genes important for fungal secondary metabolism and infection such as those coding for enzymes involved in degradation of the host cell wall. The sequence is that of Glucose oxidase from Aspergillus carbonarius (strain ITEM 5010).